Reading from the N-terminus, the 347-residue chain is 4-hydroxy-2-oxovalerate aldolase 1 (347 aa).

The Pyruvate carboxyltransferase domain occupies 8–261 (VTLYDMSLLX…ETGIDLYKIM (254 aa)). The Proton acceptor role is filled by histidine 20. Serine 171 and histidine 200 together coordinate substrate. Residues histidine 200 and histidine 202 each coordinate Mn(2+). Residue tyrosine 291 coordinates substrate.

This sequence belongs to the 4-hydroxy-2-oxovalerate aldolase family.

It catalyses the reaction (S)-4-hydroxy-2-oxopentanoate = acetaldehyde + pyruvate. This chain is 4-hydroxy-2-oxovalerate aldolase 1 (salH), found in Metapseudomonas furukawaii (Pseudomonas furukawaii).